Reading from the N-terminus, the 187-residue chain is Elongation factor P (187 aa).

Belongs to the elongation factor P family.

The protein localises to the cytoplasm. It functions in the pathway protein biosynthesis; polypeptide chain elongation. Functionally, involved in peptide bond synthesis. Stimulates efficient translation and peptide-bond synthesis on native or reconstituted 70S ribosomes in vitro. Probably functions indirectly by altering the affinity of the ribosome for aminoacyl-tRNA, thus increasing their reactivity as acceptors for peptidyl transferase. This Corynebacterium efficiens (strain DSM 44549 / YS-314 / AJ 12310 / JCM 11189 / NBRC 100395) protein is Elongation factor P.